We begin with the raw amino-acid sequence, 779 residues long: Molybdenum cofactor sulfurase (779 aa).

K247 is modified (N6-(pyridoxal phosphate)lysine). C409 is a catalytic residue. An MOSC domain is found at 624–779 (SQSLGLEGVR…LTCGDVIVVS (156 aa)). S732 carries the phosphoserine modification.

This sequence belongs to the class-V pyridoxal-phosphate-dependent aminotransferase family. MOCOS subfamily. Requires pyridoxal 5'-phosphate as cofactor.

It catalyses the reaction Mo-molybdopterin + L-cysteine + AH2 = thio-Mo-molybdopterin + L-alanine + A + H2O. It participates in cofactor biosynthesis; molybdopterin biosynthesis. Sulfurates the molybdenum cofactor. Sulfation of molybdenum is essential for xanthine dehydrogenase (XDH) and aldehyde oxidase (ADO) enzymes in which molybdenum cofactor is liganded by 1 oxygen and 1 sulfur atom in active form. This Drosophila mojavensis (Fruit fly) protein is Molybdenum cofactor sulfurase.